The sequence spans 262 residues: MSITIRTLQKRKQDGGKFSVLTAYDACFSRLISEAGVEAILVGDSLGNVIQGQTSTVPVTLEQMVYHTQCVARGNQGSLIIADIPFMGAATLERTLNAATALMQAGANMVKLEGSAWLAEAIEVLNRNGVPVCAHMGLTPQAVNSLGGYRVQGKDDDGAAELLNAAKILDQAGTALFVLECVPRALSAEITREVAAPVIGIGAAPECDGQVLVMHDMLGISPGKPARFVRNFMAETGDMRAAFKAYDDAVKDGSFPADEHCF.

Mg(2+)-binding residues include Asp44 and Asp83. 3-methyl-2-oxobutanoate contacts are provided by residues 44–45, Asp83, and Lys111; that span reads DS. Glu113 serves as a coordination point for Mg(2+). Glu180 serves as the catalytic Proton acceptor.

Belongs to the PanB family. Homodecamer; pentamer of dimers. Mg(2+) is required as a cofactor.

It localises to the cytoplasm. The catalysed reaction is 3-methyl-2-oxobutanoate + (6R)-5,10-methylene-5,6,7,8-tetrahydrofolate + H2O = 2-dehydropantoate + (6S)-5,6,7,8-tetrahydrofolate. It functions in the pathway cofactor biosynthesis; (R)-pantothenate biosynthesis; (R)-pantoate from 3-methyl-2-oxobutanoate: step 1/2. Its function is as follows. Catalyzes the reversible reaction in which hydroxymethyl group from 5,10-methylenetetrahydrofolate is transferred onto alpha-ketoisovalerate to form ketopantoate. This Alcanivorax borkumensis (strain ATCC 700651 / DSM 11573 / NCIMB 13689 / SK2) protein is 3-methyl-2-oxobutanoate hydroxymethyltransferase.